Consider the following 883-residue polypeptide: Phosphoenolpyruvate carboxylase (883 aa).

Catalysis depends on residues histidine 138 and lysine 546.

This sequence belongs to the PEPCase type 1 family. It depends on Mg(2+) as a cofactor.

The enzyme catalyses oxaloacetate + phosphate = phosphoenolpyruvate + hydrogencarbonate. Its function is as follows. Forms oxaloacetate, a four-carbon dicarboxylic acid source for the tricarboxylic acid cycle. The sequence is that of Phosphoenolpyruvate carboxylase from Escherichia coli (strain 55989 / EAEC).